The following is a 69-amino-acid chain: Large ribosomal subunit protein bL31 (69 aa).

The Zn(2+) site is built by Cys16, Cys18, Cys37, and Cys40.

It belongs to the bacterial ribosomal protein bL31 family. Type A subfamily. In terms of assembly, part of the 50S ribosomal subunit. Zn(2+) is required as a cofactor.

In terms of biological role, binds the 23S rRNA. The chain is Large ribosomal subunit protein bL31 from Teredinibacter turnerae (strain ATCC 39867 / T7901).